A 547-amino-acid polypeptide reads, in one-letter code: Undecaprenyl phosphate-alpha-4-amino-4-deoxy-L-arabinose arabinosyl transferase (547 aa).

11 helical membrane passes run 1–21 (MKLT…LPLD), 83–103 (FASA…ALQL), 111–131 (FLAG…TYSV), 174–194 (FLTK…PYVI), 205–225 (FGPL…IAVH), 253–273 (APFW…LGLL), 286–306 (ISPE…FFSV), 311–331 (LLTY…ASAV), 346–366 (AWLN…LALS), 378–398 (GALA…FIQL), and 408–428 (SALC…QSLI).

The protein belongs to the glycosyltransferase 83 family.

The protein resides in the cell inner membrane. The enzyme catalyses 4-amino-4-deoxy-alpha-L-arabinopyranosyl di-trans,octa-cis-undecaprenyl phosphate + lipid IVA = lipid IIA + di-trans,octa-cis-undecaprenyl phosphate.. It participates in lipopolysaccharide metabolism; 4-amino-4-deoxy-beta-L-arabinose-lipid A biosynthesis. Functionally, catalyzes the transfer of the L-Ara4N moiety of the glycolipid undecaprenyl phosphate-alpha-L-Ara4N to lipid A. The modified arabinose is attached to lipid A and is required for resistance to polymyxin and cationic antimicrobial peptides. This Aeromonas salmonicida (strain A449) protein is Undecaprenyl phosphate-alpha-4-amino-4-deoxy-L-arabinose arabinosyl transferase.